The primary structure comprises 473 residues: Uronate isomerase (473 aa).

It belongs to the metallo-dependent hydrolases superfamily. Uronate isomerase family.

The catalysed reaction is D-glucuronate = D-fructuronate. The enzyme catalyses aldehydo-D-galacturonate = keto-D-tagaturonate. Its pathway is carbohydrate metabolism; pentose and glucuronate interconversion. The sequence is that of Uronate isomerase (uxaC) from Bacillus subtilis (strain 168).